The following is a 299-amino-acid chain: Tyrosine recombinase XerC (299 aa).

In terms of domain architecture, Core-binding (CB) spans 1–85 (MERQLEAYCA…AVRGLYRYLN (85 aa)). Positions 106 to 285 (RLPKTLDTDR…DFQHLAAVYD (180 aa)) constitute a Tyr recombinase domain. Catalysis depends on residues Arg-146, Lys-170, His-237, Arg-240, and His-263. The O-(3'-phospho-DNA)-tyrosine intermediate role is filled by Tyr-272.

The protein belongs to the 'phage' integrase family. XerC subfamily. Forms a cyclic heterotetrameric complex composed of two molecules of XerC and two molecules of XerD.

The protein localises to the cytoplasm. Functionally, site-specific tyrosine recombinase, which acts by catalyzing the cutting and rejoining of the recombining DNA molecules. The XerC-XerD complex is essential to convert dimers of the bacterial chromosome into monomers to permit their segregation at cell division. It also contributes to the segregational stability of plasmids. The chain is Tyrosine recombinase XerC from Pseudomonas entomophila (strain L48).